We begin with the raw amino-acid sequence, 293 residues long: Small ribosomal subunit protein uS5 (293 aa).

The disordered stretch occupies residues M1 to A55. N-acetylalanine is present on A2. The segment covering A7–R34 has biased composition (gly residues). 14 repeat units span residues G9–P11, G12–P14, G15–P17, R22–F25, R26–F29, R34–G35, R36–G37, R38–G39, R40–G41, R42–G43, R44–G45, R46–G47, R48–G49, and R51–G52. Positions G9–P17 are 3 X 3 AA tandem repeats of G-G-P. Residues R22–F29 are 2 X 4 AA tandem repeats of R-G-G-F. Residues R34–G52 form a 9 X 2 AA tandem repeats of R-G region. Residues G35 to R51 show a composition bias toward basic residues. Residues K54 and K58 each participate in a glycyl lysine isopeptide (Lys-Gly) (interchain with G-Cter in ubiquitin) cross-link. The S5 DRBM domain occupies L102–V165. At T252 the chain carries Phosphothreonine. K263 is modified (N6-acetyllysine). At S264 the chain carries Phosphoserine. T270 carries the phosphothreonine modification. K275 bears the N6-acetyllysine; alternate mark. K275 participates in a covalent cross-link: Glycyl lysine isopeptide (Lys-Gly) (interchain with G-Cter in SUMO1); alternate. A Glycyl lysine isopeptide (Lys-Gly) (interchain with G-Cter in SUMO2); alternate cross-link involves residue K275. K275 is covalently cross-linked (Glycyl lysine isopeptide (Lys-Gly) (interchain with G-Cter in ubiquitin); alternate). S281 carries the post-translational modification Phosphoserine.

It belongs to the universal ribosomal protein uS5 family. Component of the small ribosomal subunit. Interacts with zinc finger protein ZNF277 (via zinc-finger domains); the interaction is direct; the interaction is extra-ribosomal. Interaction with ZNF277 competes with the binding of RPS2 to protein arginine methyltransferase PRMT3. Citrullinated by PADI4 in the Arg/Gly-rich region. Post-translationally, asymmetric arginine dimethylation by PRMT3 occurs at multiple sites in the Arg/Gly-rich region. In terms of processing, monoubiquitinated at Lys-54 and Lys-58 by RNF10 when a ribosome has stalled during translation, leading to its degradation by the proteasome. Deubiquitinated at Lys-54 and Lys-58 by USP10, preventing degradation by the proteasome and promoting 40S ribosome subunit recycling following ribosome dissociation.

It localises to the cytoplasm. It is found in the nucleus. The protein localises to the nucleolus. Component of the ribosome, a large ribonucleoprotein complex responsible for the synthesis of proteins in the cell. The small ribosomal subunit (SSU) binds messenger RNAs (mRNAs) and translates the encoded message by selecting cognate aminoacyl-transfer RNA (tRNA) molecules. The large subunit (LSU) contains the ribosomal catalytic site termed the peptidyl transferase center (PTC), which catalyzes the formation of peptide bonds, thereby polymerizing the amino acids delivered by tRNAs into a polypeptide chain. The nascent polypeptides leave the ribosome through a tunnel in the LSU and interact with protein factors that function in enzymatic processing, targeting, and the membrane insertion of nascent chains at the exit of the ribosomal tunnel. Plays a role in the assembly and function of the 40S ribosomal subunit. Mutations in this protein affects the control of translational fidelity. Involved in nucleolar processing of pre-18S ribosomal RNA and ribosome assembly. The polypeptide is Small ribosomal subunit protein uS5 (Rps2) (Rattus norvegicus (Rat)).